We begin with the raw amino-acid sequence, 324 residues long: MSNEVEQKKSIKTINDLPGISQTVINKLIEAGYSSLETLAVASPQDLSVAAGIPLSTAQKIIKEARDALDIRFKTALEVKKERMNVKKISTGSQALDGLLAGGIETRTMTEFFGEFGSGKTQLCHQLSVNVQLPPEKGGLSGKAVYIDTEGTFRWERIENMAKALGLDIDNVMNNIYYIRAINTDHQIAIVDDLQELVSKDPSIKLIVVDSVTSHFRAEYPGRENLAVRQQKLNKHLHQLTRLAEVYDIAVIITNQVMARPDMFYGDPTVAVGGHTLYHVPGIRIQLKKSRGNRRIARVVDAPHLPEGEVVFALTEEGIRDAEE.

114-121 (GEFGSGKT) contributes to the ATP binding site.

The protein belongs to the eukaryotic RecA-like protein family.

Its function is as follows. Involved in DNA repair and in homologous recombination. Binds and assemble on single-stranded DNA to form a nucleoprotein filament. Hydrolyzes ATP in a ssDNA-dependent manner and promotes DNA strand exchange between homologous DNA molecules. In Saccharolobus islandicus (strain Y.N.15.51 / Yellowstone #2) (Sulfolobus islandicus), this protein is DNA repair and recombination protein RadA.